The primary structure comprises 167 residues: SsrA-binding protein (167 aa).

The protein belongs to the SmpB family.

It is found in the cytoplasm. Required for rescue of stalled ribosomes mediated by trans-translation. Binds to transfer-messenger RNA (tmRNA), required for stable association of tmRNA with ribosomes. tmRNA and SmpB together mimic tRNA shape, replacing the anticodon stem-loop with SmpB. tmRNA is encoded by the ssrA gene; the 2 termini fold to resemble tRNA(Ala) and it encodes a 'tag peptide', a short internal open reading frame. During trans-translation Ala-aminoacylated tmRNA acts like a tRNA, entering the A-site of stalled ribosomes, displacing the stalled mRNA. The ribosome then switches to translate the ORF on the tmRNA; the nascent peptide is terminated with the 'tag peptide' encoded by the tmRNA and targeted for degradation. The ribosome is freed to recommence translation, which seems to be the essential function of trans-translation. This is SsrA-binding protein from Stenotrophomonas maltophilia (strain R551-3).